Reading from the N-terminus, the 540-residue chain is CUB domain-containing protein 2 (540 aa).

A signal peptide spans 1–24; it reads MLAELGACLLLAMVLLDSDPGTQA. The Extracellular segment spans residues 25–516; sequence MEGVKCGGVL…GTMVTQDTSD (492 aa). 6 disulfides stabilise this stretch: C30–C56, C83–C106, C145–C171, C198–C218, C257–C283, and C314–C336. 3 consecutive CUB domains span residues 30–143, 145–255, and 257–373; these read CGGV…YQKD, CGGV…YFSG, and CQEV…YIGV. N-linked (GlcNAc...) asparagine glycosylation occurs at N40. An N-linked (GlcNAc...) asparagine glycan is attached at N267. Residues N377, N435, and N436 are each glycosylated (N-linked (GlcNAc...) asparagine). The helical transmembrane segment at 517–537 threads the bilayer; sequence IVFLGLCILAGVLMIIAIVVL. Residues 538-540 lie on the Cytoplasmic side of the membrane; it reads MLL.

Its subcellular location is the membrane. The chain is CUB domain-containing protein 2 (Cdcp2) from Mus musculus (Mouse).